The following is a 252-amino-acid chain: 3-deoxy-manno-octulosonate cytidylyltransferase (252 aa).

This sequence belongs to the KdsB family.

Its subcellular location is the cytoplasm. It carries out the reaction 3-deoxy-alpha-D-manno-oct-2-ulosonate + CTP = CMP-3-deoxy-beta-D-manno-octulosonate + diphosphate. It functions in the pathway nucleotide-sugar biosynthesis; CMP-3-deoxy-D-manno-octulosonate biosynthesis; CMP-3-deoxy-D-manno-octulosonate from 3-deoxy-D-manno-octulosonate and CTP: step 1/1. Its pathway is bacterial outer membrane biogenesis; lipopolysaccharide biosynthesis. Activates KDO (a required 8-carbon sugar) for incorporation into bacterial lipopolysaccharide in Gram-negative bacteria. In Phocaeicola vulgatus (strain ATCC 8482 / DSM 1447 / JCM 5826 / CCUG 4940 / NBRC 14291 / NCTC 11154) (Bacteroides vulgatus), this protein is 3-deoxy-manno-octulosonate cytidylyltransferase.